The primary structure comprises 229 residues: 2,3-bisphosphoglycerate-dependent phosphoglycerate mutase 2 (229 aa).

Substrate contacts are provided by residues 8-15 (RHGQSEWN), 21-22 (TG), R60, 87-90 (ERHY), K98, 114-115 (RR), and 183-184 (GN). The active-site Tele-phosphohistidine intermediate is the H9. The active-site Proton donor/acceptor is E87.

It belongs to the phosphoglycerate mutase family. BPG-dependent PGAM subfamily.

The catalysed reaction is (2R)-2-phosphoglycerate = (2R)-3-phosphoglycerate. Its pathway is carbohydrate degradation; glycolysis; pyruvate from D-glyceraldehyde 3-phosphate: step 3/5. Its function is as follows. Catalyzes the interconversion of 2-phosphoglycerate and 3-phosphoglycerate. The polypeptide is 2,3-bisphosphoglycerate-dependent phosphoglycerate mutase 2 (Latilactobacillus sakei subsp. sakei (strain 23K) (Lactobacillus sakei subsp. sakei)).